The chain runs to 64 residues: U-poneritoxin(01)-Om1a (64 aa).

The N-terminal stretch at 1 to 27 (MKPSGLTFAFLVVFMMAIMYNSVQVTA) is a signal peptide. The propeptide occupies 28 to 45 (DADADAEAEALANALAEA). Methionine 62 bears the Methionine amide mark.

Post-translationally, truncated sequences of this peptide have also been found in the venom. It is possible they have been cleaved in the venom. In terms of tissue distribution, expressed by the venom gland.

It localises to the secreted. Functionally, antimicrobial peptide with activities against E.coli (MIC=1.3 uM), S.aureus (MIC=3.1 uM), and S.cerevisiae (MIC=50 uM). Also shows histamine-releasing activity (32.9% at 10 uM). Does not show hemolytic activity, even at 50 uM. It is a short peptide for which no alpha-helical region has been predicted. This is U-poneritoxin(01)-Om1a from Odontomachus monticola (Trap-jaw ant).